The following is a 181-amino-acid chain: uncharacterized protein (181 aa).

This is an uncharacterized protein from Sinorhizobium fredii (strain NBRC 101917 / NGR234).